An 853-amino-acid chain; its full sequence is Replication protein A 70 kDa DNA-binding subunit C (853 aa).

The interval 118–282 (PKEPGHSSIN…QSAYQPQQPP (165 aa)) is disordered. Composition is skewed to polar residues over residues 124-144 (SSIN…SEQQ), 159-173 (SANS…NSSD), 180-194 (SANS…SSSD), 201-211 (SANSPQRQVVH), 222-249 (PQVS…SSNA), and 263-278 (TATT…AYQP). Positions 312–399 (WTIKVRVTSK…NDYEIHLDSA (88 aa)) form a DNA-binding region, OB. Residues 602–628 (CPIMNGDRPCSKKVTNNGDGTWRCEKC) form a C4-type zinc finger.

It belongs to the replication factor A protein 1 family. As to quaternary structure, heterotrimer of RPA1, RPA2 and RPA3 (canonical replication protein A complex).

It is found in the nucleus. Functionally, component of the replication protein A complex (RPA) required for DNA recombination, repair and replication. The activity of RPA is mediated by single-stranded DNA binding and protein interactions. Probably involved in repair of double-strand DNA breaks (DSBs) induced by genotoxic stresses. In Arabidopsis thaliana (Mouse-ear cress), this protein is Replication protein A 70 kDa DNA-binding subunit C (RPA1C).